A 266-amino-acid chain; its full sequence is Cell division cycle-associated protein 3 (266 aa).

The segment at 1–84 (MGSTQSVSGT…TPMKISGPDP (84 aa)) is disordered. Residues Ser29 and Ser31 each carry the phosphoserine modification. The segment covering 32-46 (AGIQRTPIQVESSPQ) has biased composition (polar residues). Thr37 bears the Phosphothreonine mark. 2 positions are modified to phosphoserine: Ser44 and Ser67. Thr75 bears the Phosphothreonine mark. The F-box-like stretch occupies residues 90-119 (KELSEVLETEASESISSPELALPRETPLFY). Ser93 is subject to Phosphoserine. Disordered regions lie at residues 120 to 225 (DLDL…LSEN) and 242 to 266 (KAGG…LLES). Residues 143-156 (LDPKQVFTKEEAKQ) show a composition bias toward basic and acidic residues. Residues 157 to 168 (SAETIAASQNSD) show a composition bias toward polar residues. Phosphoserine is present on Ser197. The residue at position 200 (Thr200) is a Phosphothreonine. The segment covering 203 to 213 (QDDNSPGTLTL) has biased composition (polar residues). Ser207 is modified (phosphoserine). Thr210 carries the post-translational modification Phosphothreonine. Positions 250-259 (PNQDHDKENQ) are enriched in basic and acidic residues. The KEN box motif lies at 256–258 (KEN).

As to quaternary structure, interacts with SKP1. Part of a SCF (SKP1-cullin-F-box) protein ligase complex. In terms of processing, ubiquitinated and degraded by the APC/C-Cdh1 complex.

It localises to the cytoplasm. The protein localises to the cytosol. It participates in protein modification; protein ubiquitination. Its function is as follows. F-box-like protein which is required for entry into mitosis. Acts by participating in E3 ligase complexes that mediate the ubiquitination and degradation of WEE1 kinase at G2/M phase. This is Cell division cycle-associated protein 3 (Cdca3) from Mus musculus (Mouse).